Reading from the N-terminus, the 327-residue chain is Cytochrome f (327 aa).

A signal peptide spans 1–24 (MKRIGLVFCALLLLLGMGARPAAA). Residues Tyr-25, Cys-45, Cys-48, and His-49 each coordinate heme. A helical transmembrane segment spans residues 293–313 (VKWLVAFLAAITITQVLLVLK).

It belongs to the cytochrome f family. In terms of assembly, the 4 large subunits of the cytochrome b6-f complex are cytochrome b6, subunit IV (17 kDa polypeptide, PetD), cytochrome f and the Rieske protein, while the 4 small subunits are PetG, PetL, PetM and PetN. The complex functions as a dimer. Heme is required as a cofactor.

The protein resides in the cellular thylakoid membrane. Functionally, component of the cytochrome b6-f complex, which mediates electron transfer between photosystem II (PSII) and photosystem I (PSI), cyclic electron flow around PSI, and state transitions. The sequence is that of Cytochrome f from Synechococcus sp. (strain JA-2-3B'a(2-13)) (Cyanobacteria bacterium Yellowstone B-Prime).